The sequence spans 520 residues: Polyprenol-phosphate-mannose--protein mannosyltransferase (520 aa).

The next 10 membrane-spanning stretches (helical) occupy residues Trp38–Ala58, Leu119–Ile139, Gly145–Val165, Arg168–Ile188, Trp237–Leu257, Asp274–Trp294, Ile388–Leu408, Gly418–Asp438, Met441–Cys461, and Tyr485–Ile505.

This sequence belongs to the glycosyltransferase 39 family.

The protein resides in the cell membrane. It functions in the pathway protein modification; protein glycosylation. Functionally, protein O-mannosyltransferase that catalyzes the transfer of a single mannose residue from a polyprenol phospho-mannosyl lipidic donor to the hydroxyl group of selected serine and threonine residues in acceptor proteins. The sequence is that of Polyprenol-phosphate-mannose--protein mannosyltransferase (pmt) from Corynebacterium glutamicum (strain ATCC 13032 / DSM 20300 / JCM 1318 / BCRC 11384 / CCUG 27702 / LMG 3730 / NBRC 12168 / NCIMB 10025 / NRRL B-2784 / 534).